The primary structure comprises 340 residues: DNA-directed RNA polymerase subunit alpha (340 aa).

The segment at 1-236 is alpha N-terminal domain (alpha-NTD); the sequence is MLSLSKNWNT…EQLQLFISFE (236 aa). The alpha C-terminal domain (alpha-CTD) stretch occupies residues 251 to 340; that stretch reads FSPYLLKRVD…LSKRYEDSYN (90 aa).

It belongs to the RNA polymerase alpha chain family. Homodimer. The RNAP catalytic core consists of 2 alpha, 1 beta, 1 beta' and 1 omega subunit. When a sigma factor is associated with the core the holoenzyme is formed, which can initiate transcription.

It carries out the reaction RNA(n) + a ribonucleoside 5'-triphosphate = RNA(n+1) + diphosphate. In terms of biological role, DNA-dependent RNA polymerase catalyzes the transcription of DNA into RNA using the four ribonucleoside triphosphates as substrates. The protein is DNA-directed RNA polymerase subunit alpha of Rickettsia conorii (strain ATCC VR-613 / Malish 7).